The primary structure comprises 244 residues: Ribosomal RNA large subunit methyltransferase E (244 aa).

Residues 1-23 (MATGGKKSAGRTTGSGPAGGSRN) form a disordered region. G91, W93, D116, D132, and D156 together coordinate S-adenosyl-L-methionine. K196 acts as the Proton acceptor in catalysis.

It belongs to the class I-like SAM-binding methyltransferase superfamily. RNA methyltransferase RlmE family.

Its subcellular location is the cytoplasm. It catalyses the reaction uridine(2552) in 23S rRNA + S-adenosyl-L-methionine = 2'-O-methyluridine(2552) in 23S rRNA + S-adenosyl-L-homocysteine + H(+). In terms of biological role, specifically methylates the uridine in position 2552 of 23S rRNA at the 2'-O position of the ribose in the fully assembled 50S ribosomal subunit. This Paramagnetospirillum magneticum (strain ATCC 700264 / AMB-1) (Magnetospirillum magneticum) protein is Ribosomal RNA large subunit methyltransferase E.